A 209-amino-acid chain; its full sequence is MIGLVGKKVGMTRIFTEDGVSIPVTVIEVEANRVTQVKDLANDGYRAVQVTTGVKKANRVTKPEAGHFAKAGVEAGRGLWEFRLAEGEEYTVGQSISVELFADVKKVDVTGTSKGKGFAGTVKRWNFRTQDATHGNSLSHRVPGSIGQNQTPGKVFKGKKMAGQMGNERVTVQSLDVVRVDAERNLLLVKGGVPGATGCDLIVKPAVKA.

At Gln-150 the chain carries N5-methylglutamine.

Belongs to the universal ribosomal protein uL3 family. As to quaternary structure, part of the 50S ribosomal subunit. Forms a cluster with proteins L14 and L19. In terms of processing, methylated by PrmB.

One of the primary rRNA binding proteins, it binds directly near the 3'-end of the 23S rRNA, where it nucleates assembly of the 50S subunit. The polypeptide is Large ribosomal subunit protein uL3 (Salmonella arizonae (strain ATCC BAA-731 / CDC346-86 / RSK2980)).